The primary structure comprises 312 residues: Calcium-independent mitochondrial carrier protein SCaMC-3L (312 aa).

Solcar repeat units lie at residues 27–113, 121–206, and 217–304; these read GTLW…SKNF, QLFQ…LQCL, and PSGL…MKKT. The next 6 helical transmembrane spans lie at 33–50, 88–107, 131–144, 182–200, 219–243, and 279–298; these read LLSGAMAGAVSRTGTAPL, GNGINVLKIAPEYAIKFSVC, SLAVAVSQTLINPM, YLPNMLGIIPYACTDLAVY, GLVSLSSVTLSTTCGQMASYPLTLV, and GMTPTLLKVLPAGGISYLVY.

This sequence belongs to the mitochondrial carrier (TC 2.A.29) family. Mainly expressed in testis and at lesser levels in brain.

It localises to the mitochondrion inner membrane. The enzyme catalyses Mg(2+)(out) + phosphate(in) + ATP(out) = Mg(2+)(in) + phosphate(out) + ATP(in). The catalysed reaction is ADP(out) + phosphate(in) + H(+)(out) = ADP(in) + phosphate(out) + H(+)(in). Its function is as follows. Calcium-independent ATP-Mg/Pi exchanger that catalyzes the electroneutral exchange of Mg-ATP or free ADP against an hydrogenphosphate and participates in the net transport of adenine nucleotides across the mitochondria inner membrane. This Mus musculus (Mouse) protein is Calcium-independent mitochondrial carrier protein SCaMC-3L.